Here is a 509-residue protein sequence, read N- to C-terminus: FAD-linked oxidoreductase anuG (509 aa).

The first 21 residues, 1–21 (MVQISNVWGFGLAIMASLAAA), serve as a signal peptide directing secretion. Residues 75–246 (YAAPKFTVVV…TSFEMSIYPT (172 aa)) enclose the FAD-binding PCMH-type domain.

Belongs to the oxygen-dependent FAD-linked oxidoreductase family. FAD is required as a cofactor.

It catalyses the reaction (2S,9S)-annullatin H + 2 A = (2S,9S)-annullatin D + 2 AH2. It participates in secondary metabolite biosynthesis. Its function is as follows. Cytochrome P450 monooxygenase; part of the gene cluster that mediates the biosynthesis of annullatin D, an alkylated aromatic polyketide with a fused dihydrobenzofuran lactone ring system that exhibits potent agonistic activities toward the cannabinoid receptors. Within the pathway, anuG is responsible for the five-member lactone ring formation in (2S, 9S)-annullatin D via oxidative lactonization between the two hydroxyl groups. The annullatin backbone 2-hydroxymethyl-3-pentylphenol is assembled from one acetyl-CoA starter unit and 5 malonyl-CoA elongation units by cooperation of the highly reducing polyketide synthase anuA, the short-chain dehydrogenase anuB and the oxidoreductase anuC, before being hydroxylated at the C-5 alkyl chain by the cytochrome P450 monooxygenase anuE to form (8S)-annullatin E. The prenyltransferase anuH subsequently installs one isoprenyl group at the benzene ring to form (8S)-annullatin J. Enzymatic or nonenzymatic dihydro-benzofuran ring formation between the prenyl and the phenolic hydroxyl groups in (8S)-annullatin J results in two diastereomers (2S,9S)-annullatin H and compound 12. The intermediate (2S,9S)-annullatin H is then converted to (2S,9S)-annullatin D by the FAD-linked oxidoreductase anuG-catalyzed five-member lactone ring formation. The isomer 12 acts as a substrate for the short-chain dehydrogenase anuF and is oxidized to (2R)-annullatin F, which is subsequently acetylated by an acetyltransferase leading to (2R)-annullatin G formation. The remaining enzymes identified within the cluster, anuD, anuI and anuJ, seem not to be involved in annullatin biosynthesis. This is FAD-linked oxidoreductase anuG from Penicillium roqueforti (strain FM164).